Here is a 455-residue protein sequence, read N- to C-terminus: Gametocyte surface protein P45/48 (455 aa).

An N-terminal signal peptide occupies residues 1 to 30 (MLYFFGNSRFFLFFFYFFFYFVLVIKSSVG). Residues 48-186 (LGYKCDFSTE…ALVHVTVLKY (139 aa)) form the 6-Cys 1 domain. 2 disulfide bridges follow: Cys-52/Cys-74 and Cys-106/Cys-160. Asn-135, Asn-194, Asn-275, and Asn-307 each carry an N-linked (GlcNAc...) asparagine glycan. The 132-residue stretch at 302–433 (VIYGCNFSKD…ITGFMNIKIG (132 aa)) folds into the 6-Cys 2 domain. Cystine bridges form between Cys-306–Cys-334, Cys-351–Cys-419, and Cys-359–Cys-417. Gly-433 is lipidated: GPI-anchor amidated glycine. A propeptide spans 434–455 (SAYYAFLSKLFIIFIPLFFMWL) (removed in mature form).

In terms of assembly, heterodimer; heterodimerizes with PF230.

It localises to the cell surface. The protein localises to the cell membrane. In terms of biological role, gametocyte surface protein required for male fertility. This is Gametocyte surface protein P45/48 (PB45/48) from Plasmodium berghei (strain Anka).